The primary structure comprises 214 residues: Calcineurin B homologous protein 3 (214 aa).

Glycine 2 carries the N-myristoyl glycine lipid modification. An EF-hand domain is found at 110–145; that stretch reads FRKEKLKFLFHMYDADYDGIITLQEYKNVLDELMSG. Ca(2+) contacts are provided by aspartate 123, aspartate 125, aspartate 127, and glutamate 134.

The protein belongs to the calcineurin regulatory subunit family. CHP subfamily. Monomer. Homodimer. Expressed in the bipotential gonad by E4.5 and expressed in both the testis and ovary by E5.5, but with expression higher in the testis. Expressed in the testis cords but also at low levels in the interstitium. In the ovary, expression is principally in the ovarian cortex, but also in the medulla. Also expressed in the embryonic brain, with expression highest in the region between the nasal placode and olfactory bulb. Also expressed in the embryonic heart and tail.

The protein localises to the nucleus. It is found in the cytoplasm. Its subcellular location is the membrane. It localises to the cell membrane. The protein resides in the cell projection. The protein localises to the lamellipodium. It is found in the ruffle membrane. Functions as an integral cofactor in cell pH regulation by controlling plasma membrane-type Na(+)/H(+) exchange activity. Promotes the induction of hematopoietic stem cell differentiation toward megakaryocytic lineage. Essential for the coupling of ERK cascade activation with the expression of ETS family genes in megakaryocytic differentiation. Also involved in granulocytic differentiation in a ERK-dependent manner. Inhibits the phosphatase activity of calcineurin. In Gallus gallus (Chicken), this protein is Calcineurin B homologous protein 3.